Reading from the N-terminus, the 671-residue chain is Autophagy-related protein 22-2 (671 aa).

Polar residues-rich tracts occupy residues 1 to 10 (MVPRNFSESQ) and 19 to 34 (PSNS…SSSF). The interval 1 to 67 (MVPRNFSESQ…RDVPAQYAGE (67 aa)) is disordered. 2 N-linked (GlcNAc...) asparagine glycosylation sites follow: Asn5 and Asn21. The span at 39-60 (ERSSSADHDSMGPDIGSAHRDV) shows a compositional bias: basic and acidic residues. A run of 4 helical transmembrane segments spans residues 83–103 (YGFA…PITL), 155–175 (SFAM…VVSI), 188–208 (LLLF…TVVP), and 212–232 (LLGA…FVLL). The disordered stretch occupies residues 251 to 271 (PDFSPEFRPSSVDESPPEHSL). A helical transmembrane segment spans residues 324 to 344 (IGIGYSAGLFLQCVSIVIIWL). An N-linked (GlcNAc...) asparagine glycan is attached at Asn346. 7 consecutive transmembrane segments (helical) span residues 354 to 374 (LVLF…ALWL), 422 to 442 (FFLA…GTAV), 457 to 477 (GLIN…WAAI), 491 to 511 (ACIC…LPIV), 523 to 543 (WEMY…SSYC), 560 to 582 (YALY…GAIV), and 591 to 611 (AFWF…FVNV). A disordered region spans residues 634-671 (ESAGEGSRGSSIDHESGQNEGLIYPRVGENAGRGRNDI).

It belongs to the ATG22 family.

It is found in the vacuole membrane. Vacuolar effluxer which mediate the efflux of amino acids resulting from autophagic degradation. The release of autophagic amino acids allows the maintenance of protein synthesis and viability during nitrogen starvation. In Sclerotinia sclerotiorum (strain ATCC 18683 / 1980 / Ss-1) (White mold), this protein is Autophagy-related protein 22-2 (atg22-2).